The chain runs to 248 residues: Aspartate/glutamate leucyltransferase (248 aa).

This sequence belongs to the R-transferase family. Bpt subfamily.

It is found in the cytoplasm. The enzyme catalyses N-terminal L-glutamyl-[protein] + L-leucyl-tRNA(Leu) = N-terminal L-leucyl-L-glutamyl-[protein] + tRNA(Leu) + H(+). The catalysed reaction is N-terminal L-aspartyl-[protein] + L-leucyl-tRNA(Leu) = N-terminal L-leucyl-L-aspartyl-[protein] + tRNA(Leu) + H(+). Functions in the N-end rule pathway of protein degradation where it conjugates Leu from its aminoacyl-tRNA to the N-termini of proteins containing an N-terminal aspartate or glutamate. This Methylobacillus flagellatus (strain ATCC 51484 / DSM 6875 / VKM B-1610 / KT) protein is Aspartate/glutamate leucyltransferase.